We begin with the raw amino-acid sequence, 415 residues long: Glucose-1-phosphate adenylyltransferase (415 aa).

Alpha-D-glucose 1-phosphate-binding positions include Tyr-98, Gly-163, Glu-178 to Lys-179, and Ser-189.

This sequence belongs to the bacterial/plant glucose-1-phosphate adenylyltransferase family. As to quaternary structure, homotetramer.

The enzyme catalyses alpha-D-glucose 1-phosphate + ATP + H(+) = ADP-alpha-D-glucose + diphosphate. The protein operates within glycan biosynthesis; glycogen biosynthesis. Its function is as follows. Involved in the biosynthesis of ADP-glucose, a building block required for the elongation reactions to produce glycogen. Catalyzes the reaction between ATP and alpha-D-glucose 1-phosphate (G1P) to produce pyrophosphate and ADP-Glc. This is Glucose-1-phosphate adenylyltransferase from Fervidobacterium nodosum (strain ATCC 35602 / DSM 5306 / Rt17-B1).